The following is a 553-amino-acid chain: Arginine--tRNA ligase (553 aa).

The 'HIGH' region motif lies at Ala130–His140.

It belongs to the class-I aminoacyl-tRNA synthetase family. In terms of assembly, monomer.

It localises to the cytoplasm. It catalyses the reaction tRNA(Arg) + L-arginine + ATP = L-arginyl-tRNA(Arg) + AMP + diphosphate. The polypeptide is Arginine--tRNA ligase (Staphylococcus epidermidis (strain ATCC 12228 / FDA PCI 1200)).